Consider the following 657-residue polypeptide: ER degradation-enhancing alpha-mannosidase-like protein 1 (657 aa).

At 1–4 (MQWR) the chain is on the cytoplasmic side. Residues 5–25 (ALVLGLVLLRLGLHGVLWLVF) form a helical; Signal-anchor for type II membrane protein membrane-spanning segment. At 26-657 (GLGPSMGFYQ…RQIDQMVGLI (632 aa)) the chain is on the lumenal side. The interval 48-94 (SPDGPASPTSGPVGRPGGVSGPSWLQPPGTGAAQSPRKAPRRPGPGM) is disordered. Asn-181, Asn-198, Asn-299, Asn-342, and Asn-624 each carry an N-linked (GlcNAc...) asparagine glycan.

The protein belongs to the glycosyl hydrolase 47 family. As to quaternary structure, interacts with DNAJC10. Interacts with DERL2 and DERL3. Binds to SEL1L.

It localises to the endoplasmic reticulum membrane. Extracts misfolded glycoproteins, but not glycoproteins undergoing productive folding, from the calnexin cycle. It is directly involved in endoplasmic reticulum-associated degradation (ERAD) and targets misfolded glycoproteins for degradation in an N-glycan-independent manner, probably by forming a complex with SEL1L. It has low mannosidase activity, catalyzing mannose trimming from Man8GlcNAc2 to Man7GlcNAc2. This chain is ER degradation-enhancing alpha-mannosidase-like protein 1 (EDEM1), found in Homo sapiens (Human).